An 86-amino-acid chain; its full sequence is Putative regulatory protein Dvul_2085 (86 aa).

It belongs to the RemA family.

The sequence is that of Putative regulatory protein Dvul_2085 from Nitratidesulfovibrio vulgaris (strain DP4) (Desulfovibrio vulgaris).